Here is a 325-residue protein sequence, read N- to C-terminus: MTRYSRITGTGSYLPPHRVTNDDLVAQLAQQGIETSDEWIVERTGIRARHFADRDVTSSDLALEASRRALEAAGCQAQDLDLIIVATSTPDMVFPSTACILQNKLGANGCPAFDVQAVCSGFVYALTVADAMIRSGGARRALVVGSEVFSRILDFNDRTTCVLFGDGAGAVVLEASEAPGILASDLHADGSHVGILCVPGNVYGGQILGDPLLKMDGQAVFKLAVGVLEKAARATLDKAGMTDADIDWLIPHQANIRIMQSTARKLKLSMDKVVVTVDQHGNTSAASIPLALDHGVRNGQVQPGQTVLLEGVGGGFTWGAVLLKM.

Catalysis depends on residues Cys-119 and His-252. The ACP-binding stretch occupies residues 253-257 (QANIR). Residue Asn-282 is part of the active site.

This sequence belongs to the thiolase-like superfamily. FabH family. As to quaternary structure, homodimer.

Its subcellular location is the cytoplasm. It catalyses the reaction malonyl-[ACP] + acetyl-CoA + H(+) = 3-oxobutanoyl-[ACP] + CO2 + CoA. Its pathway is lipid metabolism; fatty acid biosynthesis. Functionally, catalyzes the condensation reaction of fatty acid synthesis by the addition to an acyl acceptor of two carbons from malonyl-ACP. Catalyzes the first condensation reaction which initiates fatty acid synthesis and may therefore play a role in governing the total rate of fatty acid production. Possesses both acetoacetyl-ACP synthase and acetyl transacylase activities. Its substrate specificity determines the biosynthesis of branched-chain and/or straight-chain of fatty acids. The polypeptide is Beta-ketoacyl-[acyl-carrier-protein] synthase III (Acidovorax ebreus (strain TPSY) (Diaphorobacter sp. (strain TPSY))).